Reading from the N-terminus, the 340-residue chain is Guanine nucleotide-binding protein G(I)/G(S)/G(T) subunit beta-2 (340 aa).

Ser2 carries the N-acetylserine modification. WD repeat units follow at residues 53-83 (GHLAKIYAMHWGTDSRLLVSASQDGKLIIWD), 95-125 (LRSSWVMTCAYAPSGNFVACGGLDNICSIYS), 141-170 (GHTGYLSCCRFLDDNQIITSSGDTTCALWD), 182-212 (GHSGDVMSLSLAPDGRTFVSGACDASIKLWD), 224-254 (GHESDINAVAFFPNGYAFTTGSDDATCRLFD), 268-298 (NIICGITSVAFSRSGRLLLAGYDDFNCNIWD), and 310-340 (GHDNRVSCLGVTDDGMAVATGSWDSFLKIWN). At Tyr239 the chain carries Phosphotyrosine.

Belongs to the WD repeat G protein beta family. As to quaternary structure, g proteins are composed of 3 units, alpha, beta and gamma. In this context, interacts with GNAI2 and GNG2. Interacts with ARHGEF18 and RASD2. Interacts with ATXN10. Interacts with SCN8A. In terms of tissue distribution, expressed in all cardiac subcompartments and in the brain, with highest levels in the atrioventricular node and brain.

The protein localises to the cytoplasm. It localises to the perinuclear region. Its subcellular location is the cell membrane. Functionally, guanine nucleotide-binding proteins (G proteins) are involved as a modulator or transducer in various transmembrane signaling systems. The beta and gamma chains are required for the GTPase activity, for replacement of GDP by GTP, and for G protein-effector interaction. This chain is Guanine nucleotide-binding protein G(I)/G(S)/G(T) subunit beta-2 (GNB2), found in Homo sapiens (Human).